Here is a 134-residue protein sequence, read N- to C-terminus: Holo-[acyl-carrier-protein] synthase (134 aa).

Residues aspartate 8 and glutamate 57 each coordinate Mg(2+).

This sequence belongs to the P-Pant transferase superfamily. AcpS family. It depends on Mg(2+) as a cofactor.

It is found in the cytoplasm. It catalyses the reaction apo-[ACP] + CoA = holo-[ACP] + adenosine 3',5'-bisphosphate + H(+). In terms of biological role, transfers the 4'-phosphopantetheine moiety from coenzyme A to a Ser of acyl-carrier-protein. This chain is Holo-[acyl-carrier-protein] synthase, found in Rhizobium etli (strain CIAT 652).